Here is a 200-residue protein sequence, read N- to C-terminus: NADH-quinone oxidoreductase subunit C (200 aa).

It belongs to the complex I 30 kDa subunit family. As to quaternary structure, NDH-1 is composed of 14 different subunits. Subunits NuoB, C, D, E, F, and G constitute the peripheral sector of the complex.

The protein resides in the cell inner membrane. The catalysed reaction is a quinone + NADH + 5 H(+)(in) = a quinol + NAD(+) + 4 H(+)(out). Its function is as follows. NDH-1 shuttles electrons from NADH, via FMN and iron-sulfur (Fe-S) centers, to quinones in the respiratory chain. The immediate electron acceptor for the enzyme in this species is believed to be ubiquinone. Couples the redox reaction to proton translocation (for every two electrons transferred, four hydrogen ions are translocated across the cytoplasmic membrane), and thus conserves the redox energy in a proton gradient. This chain is NADH-quinone oxidoreductase subunit C, found in Ralstonia nicotianae (strain ATCC BAA-1114 / GMI1000) (Ralstonia solanacearum).